Here is a 142-residue protein sequence, read N- to C-terminus: Protein archease (142 aa).

Positions 12, 141, and 142 each coordinate Ca(2+).

This sequence belongs to the archease family.

Activates the tRNA-splicing ligase complex by facilitating the enzymatic turnover of catalytic subunit RtcB. Acts by promoting the guanylylation of RtcB, a key intermediate step in tRNA ligation. Can also alter the NTP specificity of RtcB such that ATP, dGTP or ITP is used efficiently. This is Protein archease from Thermococcus gammatolerans (strain DSM 15229 / JCM 11827 / EJ3).